The sequence spans 329 residues: Lipoyl synthase (329 aa).

7 residues coordinate [4Fe-4S] cluster: C55, C60, C66, C81, C85, C88, and S292. The region spanning W67–L281 is the Radical SAM core domain.

Belongs to the radical SAM superfamily. Lipoyl synthase family. It depends on [4Fe-4S] cluster as a cofactor.

It is found in the cytoplasm. The catalysed reaction is [[Fe-S] cluster scaffold protein carrying a second [4Fe-4S](2+) cluster] + N(6)-octanoyl-L-lysyl-[protein] + 2 oxidized [2Fe-2S]-[ferredoxin] + 2 S-adenosyl-L-methionine + 4 H(+) = [[Fe-S] cluster scaffold protein] + N(6)-[(R)-dihydrolipoyl]-L-lysyl-[protein] + 4 Fe(3+) + 2 hydrogen sulfide + 2 5'-deoxyadenosine + 2 L-methionine + 2 reduced [2Fe-2S]-[ferredoxin]. Its pathway is protein modification; protein lipoylation via endogenous pathway; protein N(6)-(lipoyl)lysine from octanoyl-[acyl-carrier-protein]: step 2/2. Its function is as follows. Catalyzes the radical-mediated insertion of two sulfur atoms into the C-6 and C-8 positions of the octanoyl moiety bound to the lipoyl domains of lipoate-dependent enzymes, thereby converting the octanoylated domains into lipoylated derivatives. The chain is Lipoyl synthase from Leifsonia xyli subsp. xyli (strain CTCB07).